The chain runs to 294 residues: tRNA pseudouridine synthase B (294 aa).

D38 functions as the Nucleophile in the catalytic mechanism.

This sequence belongs to the pseudouridine synthase TruB family. Type 1 subfamily.

The enzyme catalyses uridine(55) in tRNA = pseudouridine(55) in tRNA. Functionally, responsible for synthesis of pseudouridine from uracil-55 in the psi GC loop of transfer RNAs. This Clostridium perfringens (strain 13 / Type A) protein is tRNA pseudouridine synthase B.